The primary structure comprises 125 residues: Glycine cleavage system H protein (125 aa).

Residues 19–101 (IATIGITDYA…MGDGWFIKLR (83 aa)) form the Lipoyl-binding domain. Lys-60 is modified (N6-lipoyllysine).

This sequence belongs to the GcvH family. The glycine cleavage system is composed of four proteins: P, T, L and H. Requires (R)-lipoate as cofactor.

Its function is as follows. The glycine cleavage system catalyzes the degradation of glycine. The H protein shuttles the methylamine group of glycine from the P protein to the T protein. This is Glycine cleavage system H protein from Parvibaculum lavamentivorans (strain DS-1 / DSM 13023 / NCIMB 13966).